A 453-amino-acid chain; its full sequence is MKFSAVILAAGKGTRMYSNMPKVLHTLAGKPMVKHVIDTCTGLGAQNIHLVYGHGGDQMQAALAEEPVNWVLQAEQLGTGHAVDQASPQFEDDEKILVLYGDVPLISSETIESLLDAQPKGGIALLTVVLDNPTGYGRIVRKNGPVVAIVEQKDANEEQKLIKEINTGVMVATGGDLKRWLAGLNNDNAQGEYYLTDVIAAAHDEGNAVEAVHPVSPIEVEGVNDRAQLARLERAFQAAQAKKLLEQGVMLRDPARFDLRGELQCGLDVEIDVNVIIEGNVSLGDNVVIGAGCVLKDCEIDDNTIVRPYSVIEGATVGEQCTVGPFTRLRPGAEMRNDSHVGNFVEVKNARIGEGSKANHLTYLGDAEIGQRTNIGAGTITCNYDGANKFKTIIGNDVFVGSDSQLVAPLTIADGATIGAGTTLTKDVAEGELVITRAKERKVTGWQRPVKKK.

The pyrophosphorylase stretch occupies residues 1–226 (MKFSAVILAA…PIEVEGVNDR (226 aa)). Residues 8 to 11 (LAAG), K22, Q73, 78 to 79 (GT), 100 to 102 (YGD), G137, E151, N166, and N224 contribute to the UDP-N-acetyl-alpha-D-glucosamine site. D102 contacts Mg(2+). Mg(2+) is bound at residue N224. The interval 227-247 (AQLARLERAFQAAQAKKLLEQ) is linker. The interval 248 to 453 (GVMLRDPARF…TGWQRPVKKK (206 aa)) is N-acetyltransferase. UDP-N-acetyl-alpha-D-glucosamine-binding residues include R330 and K348. H360 (proton acceptor) is an active-site residue. UDP-N-acetyl-alpha-D-glucosamine-binding residues include Y363 and N374. Acetyl-CoA is bound by residues A377, 383-384 (NY), S402, A420, and R437.

The protein in the N-terminal section; belongs to the N-acetylglucosamine-1-phosphate uridyltransferase family. In the C-terminal section; belongs to the transferase hexapeptide repeat family. In terms of assembly, homotrimer. The cofactor is Mg(2+).

The protein resides in the cytoplasm. The catalysed reaction is alpha-D-glucosamine 1-phosphate + acetyl-CoA = N-acetyl-alpha-D-glucosamine 1-phosphate + CoA + H(+). It catalyses the reaction N-acetyl-alpha-D-glucosamine 1-phosphate + UTP + H(+) = UDP-N-acetyl-alpha-D-glucosamine + diphosphate. It participates in nucleotide-sugar biosynthesis; UDP-N-acetyl-alpha-D-glucosamine biosynthesis; N-acetyl-alpha-D-glucosamine 1-phosphate from alpha-D-glucosamine 6-phosphate (route II): step 2/2. It functions in the pathway nucleotide-sugar biosynthesis; UDP-N-acetyl-alpha-D-glucosamine biosynthesis; UDP-N-acetyl-alpha-D-glucosamine from N-acetyl-alpha-D-glucosamine 1-phosphate: step 1/1. Its pathway is bacterial outer membrane biogenesis; LPS lipid A biosynthesis. Its function is as follows. Catalyzes the last two sequential reactions in the de novo biosynthetic pathway for UDP-N-acetylglucosamine (UDP-GlcNAc). The C-terminal domain catalyzes the transfer of acetyl group from acetyl coenzyme A to glucosamine-1-phosphate (GlcN-1-P) to produce N-acetylglucosamine-1-phosphate (GlcNAc-1-P), which is converted into UDP-GlcNAc by the transfer of uridine 5-monophosphate (from uridine 5-triphosphate), a reaction catalyzed by the N-terminal domain. This Vibrio vulnificus (strain CMCP6) protein is Bifunctional protein GlmU.